The following is a 967-amino-acid chain: Kinesin heavy chain (967 aa).

A Kinesin motor domain is found at 8–326 (NIKVICRVRP…LLFGQRAKTI (319 aa)). 85–92 (GQTSSGKT) is a binding site for ATP. The microtubule-binding stretch occupies residues 173–314 (VSSPEEVMEV…PASYNESETK (142 aa)). Disordered stretches follow at residues 387-411 (VPAE…NEGD) and 923-967 (KPIR…ESKA). Residues 392–861 (PATSTTSLAG…RDNADLRCEL (470 aa)) are a coiled coil. Residues 862–967 (PKLEKRLRAT…PIRMAPESKA (106 aa)) are globular. Residues 949 to 958 (QNGPMITSTP) are compositionally biased toward polar residues.

Belongs to the TRAFAC class myosin-kinesin ATPase superfamily. Kinesin family. Kinesin subfamily. Oligomer composed of two heavy chains and two light chains. Interacts with amyloid-beta precursor-like protein (via cytoplasmic domain).

It localises to the cytoplasm. The protein localises to the cytoskeleton. Its subcellular location is the cell projection. It is found in the axon. Its function is as follows. Kinesin is a microtubule-associated force-producing protein that may play a role in organelle transport. In Doryteuthis pealeii (Longfin inshore squid), this protein is Kinesin heavy chain.